A 425-amino-acid polypeptide reads, in one-letter code: Tol-Pal system protein TolB (425 aa).

The N-terminal stretch at 1 to 25 is a signal peptide; it reads MTRKHILSFALMTALGMTVTSTAFA.

It belongs to the TolB family. The Tol-Pal system is composed of five core proteins: the inner membrane proteins TolA, TolQ and TolR, the periplasmic protein TolB and the outer membrane protein Pal. They form a network linking the inner and outer membranes and the peptidoglycan layer.

The protein resides in the periplasm. Part of the Tol-Pal system, which plays a role in outer membrane invagination during cell division and is important for maintaining outer membrane integrity. In Acinetobacter baylyi (strain ATCC 33305 / BD413 / ADP1), this protein is Tol-Pal system protein TolB.